The following is a 407-amino-acid chain: Fructose-1,6-bisphosphatase, chloroplastic (407 aa).

The transit peptide at 1–50 (MAAATASSQLIFSKPYSPSRLCPFQLCVFDAKSVLSSSRRKHVNGSGVRC) directs the protein to the chloroplast. Mg(2+) contacts are provided by E126, E155, D176, L178, and D179. 179 to 182 (DGSS) is a binding site for substrate. The cysteines at positions 203 and 223 are disulfide-linked. 5 residues coordinate substrate: N287, Y319, Y337, Y339, and K349. Residue E355 participates in Mg(2+) binding.

Belongs to the FBPase class 1 family. In terms of assembly, homotetramer. It depends on Mg(2+) as a cofactor.

It localises to the plastid. The protein localises to the chloroplast stroma. The catalysed reaction is beta-D-fructose 1,6-bisphosphate + H2O = beta-D-fructose 6-phosphate + phosphate. Its pathway is carbohydrate biosynthesis; Calvin cycle. The protein is Fructose-1,6-bisphosphatase, chloroplastic (FBP) of Pisum sativum (Garden pea).